Reading from the N-terminus, the 629-residue chain is tRNA uridine 5-carboxymethylaminomethyl modification enzyme MnmG (629 aa).

Gly13–Gly18 contacts FAD. Gly273–Phe287 lines the NAD(+) pocket.

It belongs to the MnmG family. Homodimer. Heterotetramer of two MnmE and two MnmG subunits. Requires FAD as cofactor.

The protein localises to the cytoplasm. Its function is as follows. NAD-binding protein involved in the addition of a carboxymethylaminomethyl (cmnm) group at the wobble position (U34) of certain tRNAs, forming tRNA-cmnm(5)s(2)U34. This is tRNA uridine 5-carboxymethylaminomethyl modification enzyme MnmG from Aeromonas salmonicida (strain A449).